The chain runs to 285 residues: 2,3,4,5-tetrahydropyridine-2,6-dicarboxylate N-succinyltransferase (285 aa).

Positions 111 and 148 each coordinate substrate.

The protein belongs to the transferase hexapeptide repeat family. As to quaternary structure, homotrimer.

It localises to the cytoplasm. It catalyses the reaction (S)-2,3,4,5-tetrahydrodipicolinate + succinyl-CoA + H2O = (S)-2-succinylamino-6-oxoheptanedioate + CoA. It participates in amino-acid biosynthesis; L-lysine biosynthesis via DAP pathway; LL-2,6-diaminopimelate from (S)-tetrahydrodipicolinate (succinylase route): step 1/3. This chain is 2,3,4,5-tetrahydropyridine-2,6-dicarboxylate N-succinyltransferase, found in Sinorhizobium medicae (strain WSM419) (Ensifer medicae).